We begin with the raw amino-acid sequence, 263 residues long: 4-hydroxy-tetrahydrodipicolinate reductase (263 aa).

10-15 is a binding site for NAD(+); that stretch reads GASGKM. An NADP(+)-binding site is contributed by Arg-38. Residues 97–99 and 123–126 contribute to the NAD(+) site; these read GTT and APNF. The active-site Proton donor/acceptor is His-153. His-154 serves as a coordination point for (S)-2,3,4,5-tetrahydrodipicolinate. Lys-157 serves as the catalytic Proton donor. 163-164 is a (S)-2,3,4,5-tetrahydrodipicolinate binding site; the sequence is GT.

Belongs to the DapB family.

The protein resides in the cytoplasm. The catalysed reaction is (S)-2,3,4,5-tetrahydrodipicolinate + NAD(+) + H2O = (2S,4S)-4-hydroxy-2,3,4,5-tetrahydrodipicolinate + NADH + H(+). It carries out the reaction (S)-2,3,4,5-tetrahydrodipicolinate + NADP(+) + H2O = (2S,4S)-4-hydroxy-2,3,4,5-tetrahydrodipicolinate + NADPH + H(+). Its pathway is amino-acid biosynthesis; L-lysine biosynthesis via DAP pathway; (S)-tetrahydrodipicolinate from L-aspartate: step 4/4. In terms of biological role, catalyzes the conversion of 4-hydroxy-tetrahydrodipicolinate (HTPA) to tetrahydrodipicolinate. The polypeptide is 4-hydroxy-tetrahydrodipicolinate reductase (Dehalococcoides mccartyi (strain CBDB1)).